A 105-amino-acid chain; its full sequence is MALWTRLVPLLALLALWAPAPAHAFVNQHLCGSHLVEALYLVCGERGFFYTPKARREVEGPQVGALELAGGPGAGGLEGPPQKRGIVEQCCAGVCSLYQLENYCN.

An N-terminal signal peptide occupies residues 1–24; that stretch reads MALWTRLVPLLALLALWAPAPAHA. Intrachain disulfides connect cysteine 31–cysteine 91, cysteine 43–cysteine 104, and cysteine 90–cysteine 95. Residues 57-82 constitute a propeptide, c peptide; sequence EVEGPQVGALELAGGPGAGGLEGPPQ.

Belongs to the insulin family. Heterodimer of a B chain and an A chain linked by two disulfide bonds.

Its subcellular location is the secreted. Insulin decreases blood glucose concentration. It increases cell permeability to monosaccharides, amino acids and fatty acids. It accelerates glycolysis, the pentose phosphate cycle, and glycogen synthesis in liver. The protein is Insulin (INS) of Ovis aries (Sheep).